A 196-amino-acid chain; its full sequence is Chloroplastic ATP-dependent Clp protease proteolytic subunit 1 (196 aa).

Catalysis depends on serine 101, which acts as the Nucleophile. The active site involves histidine 126.

Belongs to the peptidase S14 family. In terms of assembly, component of the chloroplastic Clp protease core complex which consist of at least 16 proteins: CLPP4 (3 copies), CLPP5 (3 copies), CLPR4 (2 copies), ClpP1 (1 copy), CLPP6 (1 copy), CLPR2 (1 copy), CLPT1 (1 copy), CLPT2 (1 copy) and 3 copies of CLPP3 and/or CLPR1 and/or CLPR3. The core complex is organized in two heptameric rings, one containing CLPP3,4,5,6 in a 1:2:3:1 ratio and the other CLPP1 and CLPR1,2,3,4 in a 3:1:1:1:1 ratio. As to expression, mostly expressed in leaves. Also detected in stems, and to a lower extent, in roots (at protein level).

The protein localises to the plastid. Its subcellular location is the chloroplast stroma. The catalysed reaction is Hydrolysis of proteins to small peptides in the presence of ATP and magnesium. alpha-casein is the usual test substrate. In the absence of ATP, only oligopeptides shorter than five residues are hydrolyzed (such as succinyl-Leu-Tyr-|-NHMec, and Leu-Tyr-Leu-|-Tyr-Trp, in which cleavage of the -Tyr-|-Leu- and -Tyr-|-Trp bonds also occurs).. Functionally, cleaves peptides in various proteins in a process that requires ATP hydrolysis. Has a chymotrypsin-like activity. Plays a major role in the degradation of misfolded proteins. In Arabidopsis thaliana (Mouse-ear cress), this protein is Chloroplastic ATP-dependent Clp protease proteolytic subunit 1.